A 367-amino-acid chain; its full sequence is Protein RecA (367 aa).

73 to 80 (GPESSGKT) serves as a coordination point for ATP.

This sequence belongs to the RecA family.

The protein resides in the cytoplasm. Its function is as follows. Can catalyze the hydrolysis of ATP in the presence of single-stranded DNA, the ATP-dependent uptake of single-stranded DNA by duplex DNA, and the ATP-dependent hybridization of homologous single-stranded DNAs. It interacts with LexA causing its activation and leading to its autocatalytic cleavage. This chain is Protein RecA, found in Delftia acidovorans (strain DSM 14801 / SPH-1).